The sequence spans 343 residues: Protein RecA (343 aa).

Residue 66–73 (GPESSGKT) participates in ATP binding.

The protein belongs to the RecA family.

It is found in the cytoplasm. Its function is as follows. Can catalyze the hydrolysis of ATP in the presence of single-stranded DNA, the ATP-dependent uptake of single-stranded DNA by duplex DNA, and the ATP-dependent hybridization of homologous single-stranded DNAs. It interacts with LexA causing its activation and leading to its autocatalytic cleavage. This Dechloromonas aromatica (strain RCB) protein is Protein RecA.